The sequence spans 396 residues: MPVVLVVNSGSSSFKYQLIEMDTESVLASGLVERIGEPTGSTRHKAGGDSWERELPIADHTAGFQAMLDAFAEHGPSLEEEPPVAVGHRVVHGGDVFVEPTVVTDDVKADIDDLSALAPLHNPGALQGIAAAQTAFPDVPHVAVFDTAFHQTLPAEAYTYAIDRELAAAHRIRRYGFHGTSHKFVSEAAARLLGKPLEETRIIVLHLGNGASAAAVQGGRSIDTSMGLTPLEGLVMGTRSGDIDPAILFHLARHTDLGLDDLETLLNRRSGLLGLTGLGDMRDVQRAAADGDEAAQTALGVYRHRIRHYVGAYAAQLGGVDAVVFTAGVGENNPLVRRRSLAGLEFMGIGIDDDRNELISSEARFVSPEGSPVAVLVIPTDEELEIARQSLAATAG.

A Mg(2+)-binding site is contributed by Asn-8. Lys-15 lines the ATP pocket. Residue Arg-89 coordinates substrate. Asp-146 acts as the Proton donor/acceptor in catalysis. ATP contacts are provided by residues 206-210, 280-282, and 328-332; these read HLGNG, DMR, and GVGEN. Glu-382 contacts Mg(2+).

Belongs to the acetokinase family. In terms of assembly, homodimer. The cofactor is Mg(2+). It depends on Mn(2+) as a cofactor.

Its subcellular location is the cytoplasm. It catalyses the reaction acetate + ATP = acetyl phosphate + ADP. Its pathway is metabolic intermediate biosynthesis; acetyl-CoA biosynthesis; acetyl-CoA from acetate: step 1/2. Catalyzes the formation of acetyl phosphate from acetate and ATP. Can also catalyze the reverse reaction. This is Acetate kinase from Clavibacter michiganensis subsp. michiganensis (strain NCPPB 382).